The sequence spans 325 residues: Cytochrome c biogenesis protein CcsA (325 aa).

8 consecutive transmembrane segments (helical) span residues 14 to 34, 36 to 56, 68 to 88, 97 to 117, 142 to 162, 233 to 253, 260 to 280, and 294 to 314; these read TFAI…FPNL, GLPA…AALL, ISNL…IHLL, LVGA…AFTL, VMMV…AFLV, VIGL…VWAN, WSWD…AAYL, and AILA…VNLL.

It belongs to the CcmF/CycK/Ccl1/NrfE/CcsA family. As to quaternary structure, may interact with ccs1.

Its subcellular location is the cellular thylakoid membrane. Functionally, required during biogenesis of c-type cytochromes (cytochrome c6 and cytochrome f) at the step of heme attachment. In Synechococcus sp. (strain ATCC 27144 / PCC 6301 / SAUG 1402/1) (Anacystis nidulans), this protein is Cytochrome c biogenesis protein CcsA.